Here is a 338-residue protein sequence, read N- to C-terminus: UDP-3-O-acylglucosamine N-acyltransferase (338 aa).

The Proton acceptor role is filled by H239.

This sequence belongs to the transferase hexapeptide repeat family. LpxD subfamily. As to quaternary structure, homotrimer.

The enzyme catalyses a UDP-3-O-[(3R)-3-hydroxyacyl]-alpha-D-glucosamine + a (3R)-hydroxyacyl-[ACP] = a UDP-2-N,3-O-bis[(3R)-3-hydroxyacyl]-alpha-D-glucosamine + holo-[ACP] + H(+). The protein operates within bacterial outer membrane biogenesis; LPS lipid A biosynthesis. Its function is as follows. Catalyzes the N-acylation of UDP-3-O-acylglucosamine using 3-hydroxyacyl-ACP as the acyl donor. Is involved in the biosynthesis of lipid A, a phosphorylated glycolipid that anchors the lipopolysaccharide to the outer membrane of the cell. This chain is UDP-3-O-acylglucosamine N-acyltransferase, found in Xylella fastidiosa (strain M23).